The following is an 88-amino-acid chain: UPF0335 protein WRi_003770 (88 aa).

Belongs to the UPF0335 family.

The protein is UPF0335 protein WRi_003770 of Wolbachia sp. subsp. Drosophila simulans (strain wRi).